Here is a 1275-residue protein sequence, read N- to C-terminus: Rho1 guanine nucleotide exchange factor 3 (1275 aa).

4 disordered regions span residues 1-42, 56-113, 131-188, and 214-248; these read MKLS…SFQK, SPPF…NSAA, NNPL…SPYS, and LSPT…VEYL. Residues 7–17 show a composition bias toward basic and acidic residues; it reads LFHRSSKDHGG. 3 stretches are compositionally biased toward polar residues: residues 32–42, 80–113, and 142–151; these read PHSSSPPSFQK, ASIN…NSAA, and SPGNKQNTVD. Low complexity-rich tracts occupy residues 178 to 188 and 214 to 228; these read SSVSSHSSPYS and LSPT…SPIR. Serine 293 is modified (phosphoserine). The 193-residue stretch at 465–657 folds into the DH domain; it reads ARQNNIHELI…RATCEECDAV (193 aa). Residues 692–855 form the PH domain; the sequence is EFFFEGIVQR…WVEKINVAKK (164 aa). A CNH domain is found at 930–1239; that stretch reads YGDISCIAQF…KYYPSNSDWL (310 aa).

It is found in the cytoplasm. Functionally, stimulates the exchange of Rho1 GDP-bound form into GTP-bound form. Regulates, via interaction and activation of Rho1, beta-1,3-glucan biosynthesis and cell wall integrity during septation. Involved in the regulation of contractile ring assembly. The polypeptide is Rho1 guanine nucleotide exchange factor 3 (rgf3) (Schizosaccharomyces pombe (strain 972 / ATCC 24843) (Fission yeast)).